A 291-amino-acid polypeptide reads, in one-letter code: Protease HtpX homolog (291 aa).

2 helical membrane-spanning segments follow: residues 11–31 (INTF…GLLA) and 34–54 (FLGM…ACVQ). Zn(2+) is bound at residue His140. The active site involves Glu141. A Zn(2+)-binding site is contributed by His144. Helical transmembrane passes span 155–175 (IVFG…RALI) and 186–206 (AFSF…AMLV). Position 215 (Glu215) interacts with Zn(2+).

The protein belongs to the peptidase M48B family. It depends on Zn(2+) as a cofactor.

The protein resides in the cell membrane. This chain is Protease HtpX homolog, found in Tropheryma whipplei (strain Twist) (Whipple's bacillus).